The sequence spans 138 residues: Small ribosomal subunit protein uS11c (138 aa).

A disordered region spans residues 1 to 23 (MKKPIPRIGSRRNGRIGSRKNGR).

This sequence belongs to the universal ribosomal protein uS11 family. Part of the 30S ribosomal subunit.

It localises to the plastid. It is found in the chloroplast. The polypeptide is Small ribosomal subunit protein uS11c (Amborella trichopoda).